We begin with the raw amino-acid sequence, 963 residues long: Ubiquitin carboxyl-terminal hydrolase 11 (963 aa).

The segment at 64-93 (VTEDREPQHEELPGLDSQWRQIENGESGRE) is disordered. Over residues 65–75 (TEDREPQHEEL) the composition is skewed to basic and acidic residues. The region spanning 76–184 (PGLDSQWRQI…GQPPIERKVI (109 aa)) is the DUSP domain. An N6-acetyllysine modification is found at Lys-245. The USP domain maps to 309 to 930 (CGLTNLGNTC…AAYVLFYQRQ (622 aa)). Cys-318 acts as the Nucleophile in catalysis. Disordered regions lie at residues 644–691 (TKPN…SGVT) and 716–735 (LFTLQTVNSNGTSDRTTSPE). Ser-648 is modified (phosphoserine). Over residues 649 to 665 (DDEDDGDEKEDDEEDKD) the composition is skewed to acidic residues. Residues 717–731 (FTLQTVNSNGTSDRT) are compositionally biased toward polar residues. At Ser-733 the chain carries Phosphoserine. The active-site Proton acceptor is the His-888. Residues 938 to 957 (SPAGSSGAPASPACSSPPSS) are compositionally biased toward low complexity. Residues 938-963 (SPAGSSGAPASPACSSPPSSEFMDVN) form a disordered region. Ser-948 is modified (phosphoserine).

This sequence belongs to the peptidase C19 family. Monomer. Associated component of the Polycomb group (PcG) multiprotein PRC1-like complex. Interacts with RANBP9/RANBPM. Interacts with BRCA2. Interacts with CHUK/IKKA. Interacts with NFKBIA. Interacts with SPRY3, RAE1, MYCBP2/PAM, and KCTD6. As to quaternary structure, (Microbial infection) Interacts with papilloma virus protein 16E7.

It is found in the nucleus. It localises to the cytoplasm. Its subcellular location is the chromosome. The catalysed reaction is Thiol-dependent hydrolysis of ester, thioester, amide, peptide and isopeptide bonds formed by the C-terminal Gly of ubiquitin (a 76-residue protein attached to proteins as an intracellular targeting signal).. Its function is as follows. Protease that can remove conjugated ubiquitin from target proteins and polyubiquitin chains. Inhibits the degradation of target proteins by the proteasome. Cleaves preferentially 'Lys-6' and 'Lys-63'-linked ubiquitin chains. Has lower activity with 'Lys-11' and 'Lys-33'-linked ubiquitin chains, and extremely low activity with 'Lys-27', 'Lys-29' and 'Lys-48'-linked ubiquitin chains (in vitro). Plays a role in the regulation of pathways leading to NF-kappa-B activation. Plays a role in the regulation of DNA repair after double-stranded DNA breaks. Acts as a chromatin regulator via its association with the Polycomb group (PcG) multiprotein PRC1-like complex; may act by deubiquitinating components of the PRC1-like complex. Promotes cell proliferation by deubiquitinating phosphorylated E2F1. This Homo sapiens (Human) protein is Ubiquitin carboxyl-terminal hydrolase 11 (USP11).